The primary structure comprises 155 residues: Deoxyuridine 5'-triphosphate nucleotidohydrolase (155 aa).

Substrate is bound by residues 74–76 (RSG), Asn-87, and 91–93 (LID).

It belongs to the dUTPase family. Mg(2+) is required as a cofactor.

The catalysed reaction is dUTP + H2O = dUMP + diphosphate + H(+). It participates in pyrimidine metabolism; dUMP biosynthesis; dUMP from dCTP (dUTP route): step 2/2. Functionally, this enzyme is involved in nucleotide metabolism: it produces dUMP, the immediate precursor of thymidine nucleotides and it decreases the intracellular concentration of dUTP so that uracil cannot be incorporated into DNA. This Xylella fastidiosa (strain M12) protein is Deoxyuridine 5'-triphosphate nucleotidohydrolase.